The primary structure comprises 334 residues: Galactinol synthase 4 (334 aa).

K104 is a catalytic residue. Residues D120, D122, and H258 each coordinate Mn(2+).

It belongs to the glycosyltransferase 8 family. Galactosyltransferase subfamily. A divalent metal cation is required as a cofactor.

The protein resides in the cytoplasm. It catalyses the reaction myo-inositol + UDP-alpha-D-galactose = alpha-D-galactosyl-(1-&gt;3)-1D-myo-inositol + UDP + H(+). Its function is as follows. Galactinol synthase involved in the biosynthesis of raffinose family oligosaccharides (RFOs) that function as osmoprotectants. May promote plant stress tolerance. The polypeptide is Galactinol synthase 4 (GOLS4) (Arabidopsis thaliana (Mouse-ear cress)).